The sequence spans 246 residues: 5'-nucleotidase SurE (246 aa).

D8, D9, S39, and N91 together coordinate a divalent metal cation.

The protein belongs to the SurE nucleotidase family. The cofactor is a divalent metal cation.

The protein resides in the cytoplasm. It carries out the reaction a ribonucleoside 5'-phosphate + H2O = a ribonucleoside + phosphate. Nucleotidase that shows phosphatase activity on nucleoside 5'-monophosphates. The polypeptide is 5'-nucleotidase SurE (Dechloromonas aromatica (strain RCB)).